A 641-amino-acid polypeptide reads, in one-letter code: MDKTLSREEAKQLMQLLCLDMSCWGNLPLMRRQYLVKCKEYHPDKGGNEESMKLLNSLYLKLQDSVSSVHDLNEEEDNIWQSSQIPTYGTPDWDEWWSQFNTYWEEELRCNESMPSSPKRSAPEEEPSCSQATPPKKKHAFDASLEFPKELLEFVSHAVFSNKCITCFVVHTTREKGEVLYKKLLQKYQCSFISKHAFYNTVLIFFLTPHKHRVSAINNFCKGHCTVSFLFCKGVNNPYGLYSRMCRQPFNLCEENIPGGLKENEFNPEDLFGEPKEPSLSWNQIANFALEFDIDDVYYLLGSYIRFATKPEECEKCSKNDDATHKRVHVQNHENAVLLQESKSQKNACTQAIDRVIAERRYNCVTLTRKKLLTKRFKKLFNEMDKIVVGERKILLYMASIAWYTGLNKKIDELVVRFLKLIVDNKPKHRYWLFKGPINSGKTTLATALLNLCGGKALNINIPSEKLPFELGVALDQYMVVFEDVKGQIGIEKQLPSGNGVNNLDNLRDYLDGCVEVNLEKKHVNKRSQIFPPGIVTMNEYCIPETVAVRFEKTVMFTIKRNLRESLEKTPQLLSQRILHSGIAMLLLLIWYRPVSDFDEEIQSNVVYWKEVLDNYIGLTEFATMQMNVTNGKNILEKWFE.

N-acetylmethionine; by host is present on methionine 1. The J domain occupies 12-80; that stretch reads QLMQLLCLDM…DLNEEEDNIW (69 aa). The LXCXE motif motif lies at 108-112; it reads LRCNE. The interval 114–136 is disordered; sequence MPSSPKRSAPEEEPSCSQATPPK. A Phosphoserine; by host modification is found at serine 117. Threonine 133 is modified (phosphothreonine; by host). Positions 134-141 match the Nuclear localization signal motif; sequence PPKKKHAF. Residues 148-263 constitute a DNA-binding region (T-ag OBD); that stretch reads PKELLEFVSH…EENIPGGLKE (116 aa). The T-ag D1-type zinc finger occupies 277–369; that stretch reads EPSLSWNQIA…RRYNCVTLTR (93 aa). Positions 314, 317, 325, and 329 each coordinate Zn(2+). The SF3 helicase domain maps to 410–572; that stretch reads KIDELVVRFL…LRESLEKTPQ (163 aa). Position 436–443 (436–443) interacts with ATP; it reads GPINSGKT.

As to quaternary structure, forms homohexamers in the presence of ATP. Interacts with host HDAC1. Interacts (via LXCXE domain) with host RB1; the interaction induces the aberrant dissociation of RB1-E2F1 complex thereby disrupting RB1's activity. Interacts (via LXCXE domain) with host pRB-related proteins RBL1 and RBL2. Interacts (via C-terminus) with host TOP1 and POLA1 allowing DNA replication. Interacts with host TP53, inhibiting TP53 binding to DNA. Interacts with host preinitiation complex components TBP, TFIIA and TFIID to regulate transcription initiation. Mg(2+) is required as a cofactor. In terms of processing, phosphorylated on both serine and threonine residues. Small t antigen inhibits the dephosphorylation by the AC form of PP2A. O-Glycosylated near the C-terminal region. Post-translationally, acetylated by CBP in a TP53-dependent manner.

The protein resides in the host nucleus. It carries out the reaction Couples ATP hydrolysis with the unwinding of duplex DNA by translocating in the 3'-5' direction.. The catalysed reaction is ATP + H2O = ADP + phosphate + H(+). Isoform large T antigen is a key early protein essential for both driving viral replication and inducing cellular transformation. Plays a role in viral genome replication by driving entry of quiescent cells into the cell cycle and by autoregulating the synthesis of viral early mRNA. Displays highly oncogenic activities by corrupting the host cellular checkpoint mechanisms that guard cell division and the transcription, replication, and repair of DNA. Participates in the modulation of cellular gene expression preceeding viral DNA replication. This step involves binding to host key cell cycle regulators retinoblastoma protein RB1/pRb and TP53. Induces the disassembly of host E2F1 transcription factors from RB1, thus promoting transcriptional activation of E2F1-regulated S-phase genes. Inhibits host TP53 binding to DNA, abrogating the ability of TP53 to stimulate gene expression. Plays the role of a TFIID-associated factor (TAF) in transcription initiation for all three RNA polymerases, by stabilizing the TBP-TFIIA complex on promoters. Initiates viral DNA replication and unwinding via interactions with the viral origin of replication. Binds two adjacent sites in the SV40 origin. The replication fork movement is facilitated by Large T antigen helicase activity. Has processive 3'-5' DNA helicase activity which requires a short 3' single-stranded region and ATP. Activates the transcription of viral late mRNA, through host TBP and TFIIA stabilization. Interferes with histone deacetylation mediated by HDAC1, leading to activation of transcription. The polypeptide is Large T antigen (Homo sapiens (Human)).